The chain runs to 345 residues: S-adenosylmethionine:tRNA ribosyltransferase-isomerase (345 aa).

It belongs to the QueA family. Monomer.

The protein localises to the cytoplasm. It catalyses the reaction 7-aminomethyl-7-carbaguanosine(34) in tRNA + S-adenosyl-L-methionine = epoxyqueuosine(34) in tRNA + adenine + L-methionine + 2 H(+). The protein operates within tRNA modification; tRNA-queuosine biosynthesis. Its function is as follows. Transfers and isomerizes the ribose moiety from AdoMet to the 7-aminomethyl group of 7-deazaguanine (preQ1-tRNA) to give epoxyqueuosine (oQ-tRNA). This Anaeromyxobacter dehalogenans (strain 2CP-1 / ATCC BAA-258) protein is S-adenosylmethionine:tRNA ribosyltransferase-isomerase.